The sequence spans 1116 residues: Pleckstrin homology domain-containing family A member 5 (1116 aa).

Alanine 2 carries the N-acetylalanine modification. Positions 10–43 (ISLPRSWTYGITRGGRVFFINEEAKSTTWLHPVT) constitute a WW 1 domain. Serine 55 is subject to Phosphoserine. The WW 2 domain occupies 56 to 89 (TDLPTGWEEAYTFEGARYYINHNERKVTCKHPVT). The interval 140 to 163 (SPVGRTSRASKKVHNFGKRSNSIK) is disordered. Residues 147–156 (RASKKVHNFG) are compositionally biased toward basic residues. The PH domain occupies 169–268 (PVVRRGWLYK…WMKAMLDAAL (100 aa)). A Glycyl lysine isopeptide (Lys-Gly) (interchain with G-Cter in SUMO2) cross-link involves residue lysine 301. Residues serine 382 and serine 410 each carry the phosphoserine modification. Phosphothreonine is present on residues threonine 438 and threonine 460. The tract at residues 459-495 (RTLPRNSKTRPESICSVTPSTHDKTLGPGAEEKRRSM) is disordered. Basic and acidic residues predominate over residues 479-495 (THDKTLGPGAEEKRRSM). A phosphoserine mark is found at serine 568, serine 607, serine 809, serine 855, serine 933, and serine 937. 2 disordered regions span residues 928–978 (GASD…PATE) and 1025–1116 (RNKD…FMCV). A compositionally biased stretch (polar residues) spans 930 to 949 (SDQSPLQSPSNLRDNPFRTT). Over residues 952–978 (RRRDDKELDTAIRENDVKPDHETPATE) the composition is skewed to basic and acidic residues. Polar residues predominate over residues 1036 to 1046 (FSPQDETQTAN). The segment covering 1047–1061 (HKPEEHPEENTKNSV) has biased composition (basic and acidic residues). The span at 1070–1085 (SYESTPEVSRGNQTMA) shows a compositional bias: polar residues. Residues 1088–1101 (SLSPSPESSASPVP) show a composition bias toward low complexity.

Highly expressed in heart and kidney.

The protein localises to the cytoplasm. The chain is Pleckstrin homology domain-containing family A member 5 (PLEKHA5) from Homo sapiens (Human).